Reading from the N-terminus, the 312-residue chain is Glyoxylate/hydroxypyruvate reductase A (312 aa).

Residue Arg227 is part of the active site. The Proton donor role is filled by His275.

Belongs to the D-isomer specific 2-hydroxyacid dehydrogenase family. GhrA subfamily.

It is found in the cytoplasm. It carries out the reaction glycolate + NADP(+) = glyoxylate + NADPH + H(+). The enzyme catalyses (R)-glycerate + NAD(+) = 3-hydroxypyruvate + NADH + H(+). It catalyses the reaction (R)-glycerate + NADP(+) = 3-hydroxypyruvate + NADPH + H(+). Its function is as follows. Catalyzes the NADPH-dependent reduction of glyoxylate and hydroxypyruvate into glycolate and glycerate, respectively. In Salmonella paratyphi C (strain RKS4594), this protein is Glyoxylate/hydroxypyruvate reductase A.